A 282-amino-acid chain; its full sequence is 3-methyl-2-oxobutanoate hydroxymethyltransferase (282 aa).

Residues Asp-44 and Asp-83 each contribute to the Mg(2+) site. Residues 44-45 (DS), Asp-83, and Lys-113 contribute to the 3-methyl-2-oxobutanoate site. Glu-115 lines the Mg(2+) pocket. Glu-182 acts as the Proton acceptor in catalysis.

The protein belongs to the PanB family. As to quaternary structure, homodecamer; pentamer of dimers. Mg(2+) serves as cofactor.

It is found in the cytoplasm. It catalyses the reaction 3-methyl-2-oxobutanoate + (6R)-5,10-methylene-5,6,7,8-tetrahydrofolate + H2O = 2-dehydropantoate + (6S)-5,6,7,8-tetrahydrofolate. Its pathway is cofactor biosynthesis; (R)-pantothenate biosynthesis; (R)-pantoate from 3-methyl-2-oxobutanoate: step 1/2. Functionally, catalyzes the reversible reaction in which hydroxymethyl group from 5,10-methylenetetrahydrofolate is transferred onto alpha-ketoisovalerate to form ketopantoate. The chain is 3-methyl-2-oxobutanoate hydroxymethyltransferase from Dehalococcoides mccartyi (strain ATCC BAA-2266 / KCTC 15142 / 195) (Dehalococcoides ethenogenes (strain 195)).